A 963-amino-acid chain; its full sequence is Glycine dehydrogenase (decarboxylating) (963 aa).

Lys710 is subject to N6-(pyridoxal phosphate)lysine.

It belongs to the GcvP family. As to quaternary structure, the glycine cleavage system is composed of four proteins: P, T, L and H. Requires pyridoxal 5'-phosphate as cofactor.

It carries out the reaction N(6)-[(R)-lipoyl]-L-lysyl-[glycine-cleavage complex H protein] + glycine + H(+) = N(6)-[(R)-S(8)-aminomethyldihydrolipoyl]-L-lysyl-[glycine-cleavage complex H protein] + CO2. Functionally, the glycine cleavage system catalyzes the degradation of glycine. The P protein binds the alpha-amino group of glycine through its pyridoxal phosphate cofactor; CO(2) is released and the remaining methylamine moiety is then transferred to the lipoamide cofactor of the H protein. The protein is Glycine dehydrogenase (decarboxylating) of Pseudoalteromonas translucida (strain TAC 125).